We begin with the raw amino-acid sequence, 92 residues long: Neurophysin 2 (92 aa).

Disulfide bonds link C7–C51, C10–C24, C18–C41, C25–C31, C58–C70, C64–C82, and C71–C76.

It belongs to the vasopressin/oxytocin family.

The protein localises to the secreted. Functionally, neurophysin 2 specifically binds the midbrain peptide hormone vasopressin. This chain is Neurophysin 2 (AVP), found in Equus caballus (Horse).